Reading from the N-terminus, the 363-residue chain is Zinc finger CCCH domain-containing protein 53 (363 aa).

A C3H1-type zinc finger spans residues 154–181; the sequence is KNRPKICSFYTIGQCKRGAECSFRHEMP. Residues 225–310 enclose the RRM domain; sequence KTLYVGGLNS…PPNEYSHYPS (86 aa). A disordered region spans residues 281 to 348; sequence LISQQQNQHS…SYSYPMPPHQ (68 aa). Residues 283 to 297 are compositionally biased toward low complexity; sequence SQQQNQHSQMQQYYM. Positions 320 to 336 are enriched in polar residues; it reads FSTQESDGSSTSENNRA.

In Arabidopsis thaliana (Mouse-ear cress), this protein is Zinc finger CCCH domain-containing protein 53.